Consider the following 209-residue polypeptide: Uracil phosphoribosyltransferase (209 aa).

Residues arginine 79, arginine 104, and 131–139 (DPMLATGGS) each bind 5-phospho-alpha-D-ribose 1-diphosphate. Residues isoleucine 194 and 199–201 (GDA) each bind uracil. A 5-phospho-alpha-D-ribose 1-diphosphate-binding site is contributed by aspartate 200.

Belongs to the UPRTase family. Requires Mg(2+) as cofactor.

The enzyme catalyses UMP + diphosphate = 5-phospho-alpha-D-ribose 1-diphosphate + uracil. The protein operates within pyrimidine metabolism; UMP biosynthesis via salvage pathway; UMP from uracil: step 1/1. With respect to regulation, allosterically activated by GTP. Functionally, catalyzes the conversion of uracil and 5-phospho-alpha-D-ribose 1-diphosphate (PRPP) to UMP and diphosphate. The polypeptide is Uracil phosphoribosyltransferase (Lactobacillus gasseri (strain ATCC 33323 / DSM 20243 / BCRC 14619 / CIP 102991 / JCM 1131 / KCTC 3163 / NCIMB 11718 / NCTC 13722 / AM63)).